Reading from the N-terminus, the 901-residue chain is Protein translocase subunit SecA (901 aa).

Residues Gln-87, 105-109 (GEGKT), and Asp-512 contribute to the ATP site. The interval 839-901 (QMEEQRRQES…KYKQCHGRLA (63 aa)) is disordered. Residues 841–850 (EEQRRQESER) show a composition bias toward basic and acidic residues. Zn(2+) contacts are provided by Cys-885, Cys-887, Cys-896, and His-897. Residues 891–901 (KKYKQCHGRLA) show a composition bias toward basic residues.

Belongs to the SecA family. As to quaternary structure, monomer and homodimer. Part of the essential Sec protein translocation apparatus which comprises SecA, SecYEG and auxiliary proteins SecDF-YajC and YidC. Requires Zn(2+) as cofactor.

It localises to the cell inner membrane. Its subcellular location is the cytoplasm. It carries out the reaction ATP + H2O + cellular proteinSide 1 = ADP + phosphate + cellular proteinSide 2.. Part of the Sec protein translocase complex. Interacts with the SecYEG preprotein conducting channel. Has a central role in coupling the hydrolysis of ATP to the transfer of proteins into and across the cell membrane, serving both as a receptor for the preprotein-SecB complex and as an ATP-driven molecular motor driving the stepwise translocation of polypeptide chains across the membrane. The protein is Protein translocase subunit SecA of Erwinia tasmaniensis (strain DSM 17950 / CFBP 7177 / CIP 109463 / NCPPB 4357 / Et1/99).